The chain runs to 28 residues: C-hordein (28 aa).

The segment at 1–28 (RQLNPSSQELQSPQQSYLQQPYPQNPYL) is disordered.

As to expression, developing endosperm.

Functionally, sulfur-poor seed storage protein. This chain is C-hordein, found in Hordeum vulgare subsp. spontaneum (Wild barley).